The chain runs to 409 residues: NADH-quinone oxidoreductase subunit D (409 aa).

The protein belongs to the complex I 49 kDa subunit family. As to quaternary structure, NDH-1 is composed of 14 different subunits. Subunits NuoB, C, D, E, F, and G constitute the peripheral sector of the complex.

Its subcellular location is the cell inner membrane. It carries out the reaction a quinone + NADH + 5 H(+)(in) = a quinol + NAD(+) + 4 H(+)(out). In terms of biological role, NDH-1 shuttles electrons from NADH, via FMN and iron-sulfur (Fe-S) centers, to quinones in the respiratory chain. The immediate electron acceptor for the enzyme in this species is believed to be ubiquinone. Couples the redox reaction to proton translocation (for every two electrons transferred, four hydrogen ions are translocated across the cytoplasmic membrane), and thus conserves the redox energy in a proton gradient. This chain is NADH-quinone oxidoreductase subunit D, found in Helicobacter pylori (strain G27).